We begin with the raw amino-acid sequence, 466 residues long: Soluble pyridine nucleotide transhydrogenase (466 aa).

36 to 45 (ERYQNVGGGC) serves as a coordination point for FAD.

Belongs to the class-I pyridine nucleotide-disulfide oxidoreductase family. FAD is required as a cofactor.

The protein localises to the cytoplasm. The enzyme catalyses NAD(+) + NADPH = NADH + NADP(+). Its function is as follows. Conversion of NADPH, generated by peripheral catabolic pathways, to NADH, which can enter the respiratory chain for energy generation. This chain is Soluble pyridine nucleotide transhydrogenase, found in Escherichia coli O9:H4 (strain HS).